We begin with the raw amino-acid sequence, 400 residues long: Mu-type opioid receptor (400 aa).

Over 1-68 (MDSSAVPTNA…CPPTGSPSMI (68 aa)) the chain is Extracellular. N-linked (GlcNAc...) asparagine glycosylation is found at N9, N12, N33, N40, and N48. The chain crosses the membrane as a helical span at residues 69 to 93 (TAITIMALYSIVCVVGLFGNFLVMY). Over 94–106 (VIVRYTKMKTATN) the chain is Cytoplasmic. A helical transmembrane segment spans residues 107–131 (IYIFNLALADALVTSTLPFQSVNYL). Over 132 to 142 (MGTWPFGTILC) the chain is Extracellular. Residues C142 and C219 are joined by a disulfide bond. A helical membrane pass occupies residues 143 to 165 (KIVISIDYYNMSTSIFTLCTMSV). Residues 166–185 (DRYIAVCHPVKALDFRTPRN) are Cytoplasmic-facing. Y168 is modified (phosphotyrosine). The chain crosses the membrane as a helical span at residues 186 to 207 (AKIINVCNWILSSAIGLPVMFM). Residues 208 to 230 (ATTKYRQGSIDCTLTFSHPSWYW) lie on the Extracellular side of the membrane. A helical membrane pass occupies residues 231–255 (ENLLKICVFIFAFIMPVLIITVCYG). Residues 256 to 283 (LMILRLKSVRMLSGSKEKDRNLRRITRM) lie on the Cytoplasmic side of the membrane. Residues 284 to 306 (VLVVVAVFIICWTPIHIYVIIKA) traverse the membrane as a helical segment. Residues 307 to 314 (LVTIPETT) are Extracellular-facing. The chain crosses the membrane as a helical span at residues 315–338 (FQTVSWHFCIALGYTNSCLNPVLY). The NPxxY; plays a role in stabilizing the activated conformation of the receptor motif lies at 334 to 338 (NPVLY). Residues 339–400 (AFLDEDFKRC…NLEAETAPLP (62 aa)) are Cytoplasmic-facing. A lipid anchor (S-palmitoyl cysteine) is attached at C353. The interval 364-386 (NSTRIRQNTRDHPSTANTVDRTN) is disordered. At S365 the chain carries Phosphoserine. T372 is subject to Phosphothreonine. S377 is modified (phosphoserine). Residue T396 is modified to Phosphothreonine.

This sequence belongs to the G-protein coupled receptor 1 family. Forms homooligomers and heterooligomers with other GPCRs, such as OPRD1, OPRK1, OPRL1, NPFFR2, ADRA2A, SSTR2, CNR1 and CCR5 (probably in dimeric forms). Interacts with heterotrimeric G proteins; interaction with a heterotrimeric complex containing GNAI1, GNB1 and GNG2 stabilizes the active conformation of the receptor and increases its affinity for endomorphin-2, the synthetic opioid peptide DAMGO and for morphinan agonists. Interacts with PPL; the interaction disrupts agonist-mediated G-protein activation. Interacts (via C-terminus) with DNAJB4 (via C-terminus). Interacts with calmodulin; the interaction inhibits the constitutive activity of OPRM1; it abolishes basal and attenuates agonist-stimulated G-protein coupling. Interacts with FLNA, PLD2, RANBP9 and WLS and GPM6A. Interacts with RTP4. Interacts with SYP and GNAS. Interacts with RGS9, RGS17, RGS20, RGS4, PPP1R9B and HINT1. Post-translationally, phosphorylated. Differentially phosphorylated in basal and agonist-induced conditions. Agonist-mediated phosphorylation modulates receptor internalization. Phosphorylated by GRK2 in a agonist-dependent manner. Phosphorylation at Tyr-168 requires receptor activation, is dependent on non-receptor protein tyrosine kinase Src and results in a decrease in agonist efficacy by reducing G-protein coupling efficiency. Phosphorylated on tyrosine residues; the phosphorylation is involved in agonist-induced G-protein-independent receptor down-regulation. Phosphorylation at Ser-377 is involved in G-protein-dependent but not beta-arrestin-dependent activation of the ERK pathway. Ubiquitinated. A basal ubiquitination seems not to be related to degradation. Ubiquitination is increased upon formation of OPRM1:OPRD1 oligomers leading to proteasomal degradation; the ubiquitination is diminished by RTP4.

It is found in the cell membrane. The protein localises to the cell projection. Its subcellular location is the axon. It localises to the perikaryon. The protein resides in the dendrite. It is found in the endosome. Its function is as follows. Receptor for endogenous opioids such as beta-endorphin and endomorphin. Receptor for natural and synthetic opioids including morphine, heroin, DAMGO, fentanyl, etorphine, buprenorphin and methadone. Also activated by enkephalin peptides, such as Met-enkephalin or Met-enkephalin-Arg-Phe, with higher affinity for Met-enkephalin-Arg-Phe. Agonist binding to the receptor induces coupling to an inactive GDP-bound heterotrimeric G-protein complex and subsequent exchange of GDP for GTP in the G-protein alpha subunit leading to dissociation of the G-protein complex with the free GTP-bound G-protein alpha and the G-protein beta-gamma dimer activating downstream cellular effectors. The agonist- and cell type-specific activity is predominantly coupled to pertussis toxin-sensitive G(i) and G(o) G alpha proteins, GNAI1, GNAI2, GNAI3 and GNAO1, and to a lesser extent to pertussis toxin-insensitive G alpha proteins GNAZ and GNA15. They mediate an array of downstream cellular responses, including inhibition of adenylate cyclase activity and both N-type and L-type calcium channels, activation of inward rectifying potassium channels, mitogen-activated protein kinase (MAPK), phospholipase C (PLC), phosphoinositide/protein kinase (PKC), phosphoinositide 3-kinase (PI3K) and regulation of NF-kappa-B. Also couples to adenylate cyclase stimulatory G alpha proteins. The selective temporal coupling to G-proteins and subsequent signaling can be regulated by RGSZ proteins, such as RGS9, RGS17 and RGS4. Phosphorylation by members of the GPRK subfamily of Ser/Thr protein kinases and association with beta-arrestins is involved in short-term receptor desensitization. Beta-arrestins associate with the GPRK-phosphorylated receptor and uncouple it from the G-protein thus terminating signal transduction. The phosphorylated receptor is internalized through endocytosis via clathrin-coated pits which involves beta-arrestins. The activation of the ERK pathway occurs either in a G-protein-dependent or a beta-arrestin-dependent manner and is regulated by agonist-specific receptor phosphorylation. Acts as a class A G-protein coupled receptor (GPCR) which dissociates from beta-arrestin at or near the plasma membrane and undergoes rapid recycling. Receptor down-regulation pathways are varying with the agonist and occur dependent or independent of G-protein coupling. Endogenous ligands induce rapid desensitization, endocytosis and recycling. Heterooligomerization with other GPCRs can modulate agonist binding, signaling and trafficking properties. Involved in neurogenesis. The chain is Mu-type opioid receptor (OPRM1) from Macaca mulatta (Rhesus macaque).